The sequence spans 264 residues: S-adenosylmethionine decarboxylase proenzyme (264 aa).

The active-site Schiff-base intermediate with substrate; via pyruvic acid is Ser-112. The residue at position 112 (Ser-112) is a Pyruvic acid (Ser); by autocatalysis. His-117 serves as the catalytic Proton acceptor; for processing activity. Cys-140 serves as the catalytic Proton donor; for catalytic activity.

It belongs to the prokaryotic AdoMetDC family. Type 2 subfamily. As to quaternary structure, heterooctamer of four alpha and four beta chains arranged as a tetramer of alpha/beta heterodimers. Pyruvate is required as a cofactor. In terms of processing, is synthesized initially as an inactive proenzyme. Formation of the active enzyme involves a self-maturation process in which the active site pyruvoyl group is generated from an internal serine residue via an autocatalytic post-translational modification. Two non-identical subunits are generated from the proenzyme in this reaction, and the pyruvate is formed at the N-terminus of the alpha chain, which is derived from the carboxyl end of the proenzyme. The post-translation cleavage follows an unusual pathway, termed non-hydrolytic serinolysis, in which the side chain hydroxyl group of the serine supplies its oxygen atom to form the C-terminus of the beta chain, while the remainder of the serine residue undergoes an oxidative deamination to produce ammonia and the pyruvoyl group blocking the N-terminus of the alpha chain.

It carries out the reaction S-adenosyl-L-methionine + H(+) = S-adenosyl 3-(methylsulfanyl)propylamine + CO2. It functions in the pathway amine and polyamine biosynthesis; S-adenosylmethioninamine biosynthesis; S-adenosylmethioninamine from S-adenosyl-L-methionine: step 1/1. Catalyzes the decarboxylation of S-adenosylmethionine to S-adenosylmethioninamine (dcAdoMet), the propylamine donor required for the synthesis of the polyamines spermine and spermidine from the diamine putrescine. This is S-adenosylmethionine decarboxylase proenzyme from Pectobacterium atrosepticum (strain SCRI 1043 / ATCC BAA-672) (Erwinia carotovora subsp. atroseptica).